Reading from the N-terminus, the 226-residue chain is 7-cyano-7-deazaguanine synthase (226 aa).

8 to 18 is a binding site for ATP; the sequence is ISGGLDSTTCL. Zn(2+) is bound by residues Cys-188, Cys-198, Cys-201, and Cys-204.

This sequence belongs to the QueC family. The cofactor is Zn(2+).

It catalyses the reaction 7-carboxy-7-deazaguanine + NH4(+) + ATP = 7-cyano-7-deazaguanine + ADP + phosphate + H2O + H(+). It participates in purine metabolism; 7-cyano-7-deazaguanine biosynthesis. In terms of biological role, catalyzes the ATP-dependent conversion of 7-carboxy-7-deazaguanine (CDG) to 7-cyano-7-deazaguanine (preQ(0)). The polypeptide is 7-cyano-7-deazaguanine synthase (Coxiella burnetii (strain Dugway 5J108-111)).